The chain runs to 246 residues: MIKSFFAALSFISRLPVPARLSQGLEIEQYQRSIVTFPLVGLLLGAIAGAVALLLQPWCGVPLAALFGVLALALLTGGFHLDGLADTCDGIFSARTRDRMLEIMRDSRLGTHGGLALIFVLVAKVLVVGELLLRDIHPIAALAAACAVGRGMAALLMYRHRYAREKGLGNLFIGKISLQQTLVTMAMAIALATALLGLQGLRAALITLVLIWGLGWALKRTLGGQTGDTLGAAIELGELLFLLALL.

6 helical membrane passes run 34–54, 59–79, 113–133, 136–156, 181–201, and 203–223; these read IVTF…VALL, CGVP…TGGF, GGLA…ELLL, IHPI…AALL, TLVT…LQGL, and AALI…RTLG.

It belongs to the CobS family. It depends on Mg(2+) as a cofactor.

The protein resides in the cell inner membrane. The catalysed reaction is alpha-ribazole + adenosylcob(III)inamide-GDP = adenosylcob(III)alamin + GMP + H(+). It carries out the reaction alpha-ribazole 5'-phosphate + adenosylcob(III)inamide-GDP = adenosylcob(III)alamin 5'-phosphate + GMP + H(+). The protein operates within cofactor biosynthesis; adenosylcobalamin biosynthesis; adenosylcobalamin from cob(II)yrinate a,c-diamide: step 7/7. Its function is as follows. Joins adenosylcobinamide-GDP and alpha-ribazole to generate adenosylcobalamin (Ado-cobalamin). Also synthesizes adenosylcobalamin 5'-phosphate from adenosylcobinamide-GDP and alpha-ribazole 5'-phosphate. This Klebsiella pneumoniae subsp. pneumoniae (strain ATCC 700721 / MGH 78578) protein is Adenosylcobinamide-GDP ribazoletransferase.